Consider the following 218-residue polypeptide: Adenylate kinase (218 aa).

Position 10–15 (10–15 (GAGKGT)) interacts with ATP. The segment at 30 to 59 (STGDMLRAAVKAGTPLGIAAKKIMDEGGLV) is NMP. Residues Thr-31, Arg-36, 57–59 (GLV), 85–88 (GFPR), and Gln-92 each bind AMP. An LID region spans residues 122–159 (GRRVHPASGRTYHVKFNPPKVAGRDDVTGEELIQRDDD). ATP is bound by residues Arg-123 and 132 to 133 (TY). Positions 156 and 167 each coordinate AMP. Residue Gly-203 participates in ATP binding.

The protein belongs to the adenylate kinase family. As to quaternary structure, monomer.

The protein localises to the cytoplasm. The enzyme catalyses AMP + ATP = 2 ADP. It functions in the pathway purine metabolism; AMP biosynthesis via salvage pathway; AMP from ADP: step 1/1. In terms of biological role, catalyzes the reversible transfer of the terminal phosphate group between ATP and AMP. Plays an important role in cellular energy homeostasis and in adenine nucleotide metabolism. This chain is Adenylate kinase, found in Herminiimonas arsenicoxydans.